The sequence spans 256 residues: Small ribosomal subunit protein eS1 (256 aa).

Residues 1-18 (MAVGKNKRLSKGKKGIKK) show a composition bias toward basic residues. A disordered region spans residues 1–20 (MAVGKNKRLSKGKKGIKKRT). At alanine 2 the chain carries N-acetylalanine; partial.

It belongs to the eukaryotic ribosomal protein eS1 family. In terms of assembly, component of the small ribosomal subunit. Mature ribosomes consist of a small (40S) and a large (60S) subunit. The 40S subunit contains about 33 different proteins and 1 molecule of RNA (18S). The 60S subunit contains about 49 different proteins and 3 molecules of RNA (25S, 5.8S and 5S).

The protein resides in the cytoplasm. The protein is Small ribosomal subunit protein eS1 (rps1) of Aspergillus flavus (strain ATCC 200026 / FGSC A1120 / IAM 13836 / NRRL 3357 / JCM 12722 / SRRC 167).